Consider the following 60-residue polypeptide: Arabinogalactan protein 12 (60 aa).

Residues 1-27 form the signal peptide; that stretch reads MESMKMKLIVVLMVAIVAFSAVGNVAA. Gln28 is subject to Pyrrolidone carboxylic acid. A 4-hydroxyproline mark is found at Pro32, Pro34, and Pro36. 3 O-linked (Ara...) hydroxyproline glycosylation sites follow: Pro32, Pro34, and Pro36. Residue Ser38 is the site of GPI-anchor amidated serine attachment. The propeptide at 39 to 60 is removed in mature form; that stretch reads DAAMFVPALFASVAALASGFLF.

The protein belongs to the AG-peptide AGP family. In terms of processing, contains 4-hydroxyproline; hydroxylated on Pro-32, Pro-34 and Pro-36. Post-translationally, O-glycosylated on hydroxyprolines; noncontiguous hydroxylproline residues are glycosylated with arabinogalactan. In terms of tissue distribution, expressed in reproductive tissues. Expressed in chalaza, funiculus, stigma, septum, style and transmitting tract.

The protein localises to the cell membrane. Proteoglycan that seems to be implicated in diverse developmental roles such as differentiation, cell-cell recognition, embryogenesis and programmed cell death. The polypeptide is Arabinogalactan protein 12 (Arabidopsis thaliana (Mouse-ear cress)).